Reading from the N-terminus, the 423-residue chain is Maltooligosaccharide ABC transporter solute-binding lipoprotein (423 aa).

The signal sequence occupies residues 1 to 24 (MSSKFMKSAAVLGTATLASLLLVA). Cys-25 carries N-palmitoyl cysteine lipidation. The S-diacylglycerol cysteine moiety is linked to residue Cys-25. Substrate is bound by residues Tyr-52, Asp-77, Asp-83, 103–104 (DR), Glu-148, Asp-193, Asn-196, 251–254 (EGAG), Trp-274, and Lys-307.

Belongs to the bacterial solute-binding protein 1 family.

It localises to the cell membrane. Functionally, part of an ABC transporter complex involved in the uptake of maltodextrins. Binds glycogen-derived linear maltooligosaccharides increasing in size from maltotriose to maltooctaose with the highest affinity for maltotriose. Has a very weak affinity for maltose. Has also a very low affinity for maltotetraitol, indicating that the binding is selective for maltooligosaccharides with an intact reducing end. The chain is Maltooligosaccharide ABC transporter solute-binding lipoprotein from Streptococcus pneumoniae serotype 4 (strain ATCC BAA-334 / TIGR4).